Reading from the N-terminus, the 84-residue chain is Putative membrane protein insertion efficiency factor (84 aa).

The tract at residues 61–84 (SQGFEDPLPPNTKRTNLTHGRQTK) is disordered. Over residues 72 to 84 (TKRTNLTHGRQTK) the composition is skewed to polar residues.

It belongs to the UPF0161 family.

The protein resides in the cell inner membrane. Could be involved in insertion of integral membrane proteins into the membrane. The chain is Putative membrane protein insertion efficiency factor from Leptospira borgpetersenii serovar Hardjo-bovis (strain JB197).